The following is a 98-amino-acid chain: uncharacterized protein (98 aa).

The protein belongs to the HHV-5 UL19 protein family.

This is an uncharacterized protein from Human cytomegalovirus (strain AD169) (HHV-5).